Consider the following 72-residue polypeptide: Conotoxin VnMKLT2-011 (72 aa).

The first 23 residues, 1-23 (MMKLTCVLIIAVLFLTACQLTTA), serve as a signal peptide directing secretion. A propeptide spanning residues 24-42 (ETRDEYRAVRSSDEVRNSR) is cleaved from the precursor. Cystine bridges form between Cys-44–Cys-57, Cys-51–Cys-62, and Cys-56–Cys-71.

The protein belongs to the conotoxin O1 superfamily. As to expression, expressed by the venom duct.

Its subcellular location is the secreted. This chain is Conotoxin VnMKLT2-011, found in Conus ventricosus (Mediterranean cone).